A 226-amino-acid chain; its full sequence is 1-hydroxy-2-glutathionyl-2-methyl-3-butene dehydrogenase (226 aa).

The protein belongs to the short-chain dehydrogenases/reductases (SDR) family.

The enzyme catalyses 2-glutathionyl-2-methylbut-3-en-1-ol + 2 NAD(+) + H2O = 2-glutathionyl-2-methylbut-3-enoate + 2 NADH + 3 H(+). It catalyses the reaction 2-glutathionyl-2-methylbut-3-en-1-ol + NAD(+) = 2-glutathionyl-2-methylbut-3-enal + NADH + H(+). It carries out the reaction 2-glutathionyl-2-methylbut-3-enal + NAD(+) + H2O = 2-glutathionyl-2-methylbut-3-enoate + NADH + 2 H(+). Functionally, involved in isoprene degradation. Catalyzes the two-step NAD(+)-dependent oxidation of 2-glutathionyl-2-methylbut-3-en-1-ol (HGMB) to 2-glutathionyl-2-methylbut-3-enoate (GMBA). The chain is 1-hydroxy-2-glutathionyl-2-methyl-3-butene dehydrogenase from Rhodococcus sp. (strain AD45).